The sequence spans 425 residues: Phosphoribosylamine--glycine ligase (425 aa).

The 207-residue stretch at 109-315 (KALMQEAGIP…LEELILACVQ (207 aa)) folds into the ATP-grasp domain. 135 to 195 (IQAQGAPIVV…EECLTGQEVS (61 aa)) is an ATP binding site. Residues E285 and N287 each contribute to the Mg(2+) site.

It belongs to the GARS family. It depends on Mg(2+) as a cofactor. Requires Mn(2+) as cofactor.

The enzyme catalyses 5-phospho-beta-D-ribosylamine + glycine + ATP = N(1)-(5-phospho-beta-D-ribosyl)glycinamide + ADP + phosphate + H(+). Its pathway is purine metabolism; IMP biosynthesis via de novo pathway; N(1)-(5-phospho-D-ribosyl)glycinamide from 5-phospho-alpha-D-ribose 1-diphosphate: step 2/2. The chain is Phosphoribosylamine--glycine ligase from Nostoc sp. (strain PCC 7120 / SAG 25.82 / UTEX 2576).